The primary structure comprises 376 residues: Probable transcription factor At1g61730 (376 aa).

The segment at 1-150 (MTKKLNPLED…RVKKDEESVK (150 aa)) is disordered. Positions 17 to 40 (SDEDDVETSEAGEASDDSSSSEED) are enriched in acidic residues. S49 carries the phosphoserine modification. Positions 49-72 (SPSATTAAAPPAKSTAVSTAADSD) are enriched in low complexity. Positions 73–83 (SGSETETDSDS) are enriched in acidic residues. Polar residues predominate over residues 87 to 103 (NPPNSGSGKTIALNTVN).

This sequence belongs to the GeBP family. Interacts with DEK3.

The protein is Probable transcription factor At1g61730 of Arabidopsis thaliana (Mouse-ear cress).